The following is a 385-amino-acid chain: Muconate cycloisomerase 1-2 (385 aa).

Lysine 171 is a catalytic residue. Mn(2+)-binding residues include glutamate 226 and aspartate 251.

Belongs to the mandelate racemase/muconate lactonizing enzyme family. As to quaternary structure, homooctamer. Requires Mn(2+) as cofactor.

It carries out the reaction (S)-muconolactone = cis,cis-muconate + H(+). Its pathway is aromatic compound metabolism; beta-ketoadipate pathway; 5-oxo-4,5-dihydro-2-furylacetate from catechol: step 2/3. In terms of biological role, catalyzes a syn cycloisomerization. This is Muconate cycloisomerase 1-2 (catB2) from Acinetobacter lwoffii.